The following is a 161-amino-acid chain: Nucleotide-binding protein Daci_4781 (161 aa).

It belongs to the YajQ family.

Functionally, nucleotide-binding protein. The sequence is that of Nucleotide-binding protein Daci_4781 from Delftia acidovorans (strain DSM 14801 / SPH-1).